The chain runs to 165 residues: Cytochrome c-type biogenesis protein CcmE (165 aa).

At 1–7 (MTRKQRR) the chain is on the cytoplasmic side. Residues 8–28 (LMMIGGAGVVLVVAVGLVLNA) form a helical; Signal-anchor for type II membrane protein membrane-spanning segment. Residues 29–165 (MRGSIVFFST…ASADAMRPAR (137 aa)) lie on the Periplasmic side of the membrane. The heme site is built by His-122 and Tyr-126. The segment covering 138–149 (QGHWKDDYEKKP) has biased composition (basic and acidic residues). Residues 138-165 (QGHWKDDYEKKPPGPGAAASADAMRPAR) are disordered. A compositionally biased stretch (low complexity) spans 153–165 (GAAASADAMRPAR).

It belongs to the CcmE/CycJ family.

The protein resides in the cell inner membrane. Its function is as follows. Heme chaperone required for the biogenesis of c-type cytochromes. Transiently binds heme delivered by CcmC and transfers the heme to apo-cytochromes in a process facilitated by CcmF and CcmH. This is Cytochrome c-type biogenesis protein CcmE from Rhodopseudomonas palustris (strain HaA2).